The sequence spans 503 residues: Lysine--tRNA ligase (503 aa).

Residues Glu-412 and Glu-419 each contribute to the Mg(2+) site.

The protein belongs to the class-II aminoacyl-tRNA synthetase family. In terms of assembly, homodimer. Requires Mg(2+) as cofactor.

It localises to the cytoplasm. The catalysed reaction is tRNA(Lys) + L-lysine + ATP = L-lysyl-tRNA(Lys) + AMP + diphosphate. This Buchnera aphidicola subsp. Schizaphis graminum (strain Sg) protein is Lysine--tRNA ligase.